A 53-amino-acid polypeptide reads, in one-letter code: Large ribosomal subunit protein uL30 (53 aa).

The protein belongs to the universal ribosomal protein uL30 family. Part of the 50S ribosomal subunit.

The chain is Large ribosomal subunit protein uL30 from Deinococcus geothermalis (strain DSM 11300 / CIP 105573 / AG-3a).